The sequence spans 189 residues: Transcription factor FapR (189 aa).

It belongs to the FapR family.

In terms of biological role, transcriptional factor involved in regulation of membrane lipid biosynthesis by repressing genes involved in fatty acid and phospholipid metabolism. This chain is Transcription factor FapR, found in Listeria monocytogenes serotype 4b (strain CLIP80459).